Consider the following 408-residue polypeptide: MSSKKRKSPPQESLTSYFEKSSKSSKKYGSQNKDSDSSSTCLQQKIEIQWSITDSLYIAKYGKLKKTKKFIAFDLDGTLIKTKSGRVFSKDAADWTWWHPSVVPKLKALYQDNYSLVIFSNQNGIPRKPSAGHTFQMKIRAIFESLDLPIVLYAAILKDKFRKPLTGMWNSFLKDVNRSIDLSFIKYVGDAAGRPGDHNSTDLKFAENIGIKFETPEQFFLGHSFVPPNFESFHPKNYLVRNSSSHPYHFKKSEHQEIVVLVGFPSSGKSTLAESQIVTQGYERVNQDILKTKSKCIKAAIEALKKEKSVVIDNTNPTIESRKMWIDIAQEFEIPIRCIHLQSSEELARHNNVFRYIHHNQKQLPEIAFNSFKSRFQMPTVEEGFTNVEEVPFKCLKDYEDTWNYWYE.

The tract at residues 1–38 (MSSKKRKSPPQESLTSYFEKSSKSSKKYGSQNKDSDSS) is disordered. Position 8 is a phosphoserine (Ser8). Polar residues-rich tracts occupy residues 10–19 (PQESLTSYFE) and 28–38 (YGSQNKDSDSS). ATP is bound at residue 263–270 (GFPSSGKS).

The protein in the N-terminal section; belongs to the DNA 3' phosphatase family.

It is found in the nucleus. It carries out the reaction a 3'end (2'-deoxyribonucleotide 3'-phosphate)-DNA + H2O = a 3'-end 2'-deoxyribonucleotide-DNA + phosphate. It catalyses the reaction a 5'-end dephospho-2'-deoxyribonucleoside-DNA + ATP = a 5'-end 5'-phospho-2'-deoxyribonucleoside-DNA + ADP + H(+). Functionally, catalyzes the phosphorylation of DNA at 5'-hydroxyl termini and can dephosphorylate its 3'-phosphate termini. Has a role in the repair of breaks in single-stranded DNA. The sequence is that of Bifunctional polynucleotide phosphatase/kinase (pnk1) from Schizosaccharomyces pombe (strain 972 / ATCC 24843) (Fission yeast).